The following is a 268-amino-acid chain: Microtubule-associated protein RP/EB family member 1 (268 aa).

Residue A2 is modified to N-acetylalanine. Positions 14–116 (NLSRHDMLAW…FVQWFKKFFD (103 aa)) constitute a Calponin-homology (CH) domain. K66 is subject to N6-crotonyllysine. A Phosphotyrosine modification is found at Y124. Residues 124 to 268 (YDPVAARQGQ…GGPQEEQEEY (145 aa)) are interaction with MTUS2/TIP150. The interval 146 to 191 (LSKPKKPLGSGSAAPQRPIATQRTTAAPKAGPGMVRKNPGMGNGDD) is disordered. At S155 the chain carries Phosphoserine. Residues 185–255 (GMGNGDDEAA…LYATDEGFVI (71 aa)) enclose the EB1 C-terminal domain. Residues 206-211 (TVEDLE) are interaction with APC. The interval 208–268 (EDLEKERDFY…GGPQEEQEEY (61 aa)) is DCTN1-binding. K220 carries the post-translational modification N6-acetyllysine. Positions 220-242 (KLRNIELICQENEGENDPVLQRI) are APC-binding. The interval 232 to 255 (EGENDPVLQRIVDILYATDEGFVI) is interaction with SKA1.

The protein belongs to the MAPRE family. Homodimer. Heterodimer with MAPRE3. Interacts with DCTN1, DCTN2, TERF1 and dynein intermediate chain. Interaction with DIAPH1 and DIAPH2. Interacts (via C-terminal residues 206-211) with APC (via C-terminal residues 2674-2845); the interaction inhibits association with and bundling of F-actin. Interacts with CLASP2, DST, KIF2C and STIM1; probably required for their targeting to the growing microtubule plus ends. Interacts with MTUS2; interaction is direct and probably targets MTUS2 to microtubules. Interacts (via C-terminus) with SKA1 (via SXIP motif); the interaction is direct and stabilizes the kinetochore-microtubule attachment of the SKA1 complex. Interacts with APC2. Interacts with CLASP1. Interacts with CDK5RAP2. According to another report, MAPRE1 does not interact with CDK5RAP2. Interacts with MACF1. Interacts with RABL2/RABL2A; binds preferentially to GTP-bound RABL2. Interacts with KCNAB2. Interacts (via C-terminus) with CLIP1. Interacts with SLAIN2 and SLAIN1. Interacts with KIF18B; this interaction is required for efficient accumulation of KIF18B at microtubule plus ends. Interacts with MISP. Interacts with KNSTRN. Interacts with NCKAP5L. Interacts with AKAP9. Interacts with PDE4DIP; this interaction, which is PDE4DIP isoform-specific, is required for its recruitment to the Golgi apparatus. Interacts with CAMSAP2. May form a pericentrosomal complex with AKAP9, CDK5RAP2 and PDE4DIP isoform 2/MMG8/SMYLE; within this complex, MAPRE1 binding to CDK5RAP2 may be mediated by PDE4DIP. Contrary to other mammalian species, does not interact with CDK5RAP2, possibly due to the lack of conservation of the MAPRE1-binding motif in rat CDK5RAP2. Interacts with AKNA. Interacts with GAS2L1, GAS2L2, and GAS2L3. Interacts with RARRES1 and AGBL2. Acetylation at Lys-220 by KAT2B/PCAF promotes dynamic kinetochore-microtubule interactions in early mitosis. Post-translationally, crotonylated by KAT5 during mitosis, promoting astral microtubule plasticity and dynamic connection between astral microtubules and the cortex during mitotic chromosome segregation, thereby ensuring accurate spindle positioning in mitosis. Decrotonylated by HDAC3.

The protein resides in the cytoplasm. The protein localises to the cytoskeleton. It localises to the microtubule organizing center. Its subcellular location is the centrosome. It is found in the golgi apparatus. The protein resides in the spindle. The protein localises to the spindle pole. Its function is as follows. Plus-end tracking protein (+TIP) that binds to the plus-end of microtubules and regulates the dynamics of the microtubule cytoskeleton. Recruits other +TIP proteins to microtubules by binding to a conserved Ser-X-Leu-Pro (SXLP) motif in their polypeptide chains. Promotes cytoplasmic microtubule nucleation and elongation. Involved in mitotic spindle positioning by stabilizing microtubules and promoting dynamic connection between astral microtubules and the cortex during mitotic chromosome segregation. Assists chromosome alignment in metaphase by recruiting the SKA complex to the spindle and stabilizing its interactions with microtubule bundles (K-fibers). Also acts as a regulator of minus-end microtubule organization: interacts with the complex formed by AKAP9 and PDE4DIP, leading to recruit CAMSAP2 to the Golgi apparatus, thereby tethering non-centrosomal minus-end microtubules to the Golgi, an important step for polarized cell movement. Promotes elongation of CAMSAP2-decorated microtubule stretches on the minus-end of microtubules. Acts as a regulator of autophagosome transport via interaction with CAMSAP2. Functions downstream of Rho GTPases and DIAPH1 in stable microtubule formation. May play a role in cell migration. In Rattus norvegicus (Rat), this protein is Microtubule-associated protein RP/EB family member 1 (Mapre1).